A 303-amino-acid polypeptide reads, in one-letter code: Bidirectional sugar transporter SWEET14 (303 aa).

The Extracellular portion of the chain corresponds to 1-9; the sequence is MAGMSLQHP. A helical transmembrane segment spans residues 10–30; the sequence is WAFAFGLLGNIISFMTYLAPL. The MtN3/slv 1 domain maps to 13 to 98; that stretch reads AFGLLGNIIS…AVYLVYAPKK (86 aa). At 31–44 the chain is on the cytoplasmic side; it reads PTFYRIYKSKSTQG. A helical transmembrane segment spans residues 45–65; it reads FQSVPYVVALFSAMLWIYYAL. The Extracellular portion of the chain corresponds to 66 to 72; the sequence is LKSDECL. A helical transmembrane segment spans residues 73 to 93; sequence LITINSAGCVIETIYIAVYLV. The Cytoplasmic segment spans residues 94 to 105; sequence YAPKKAKMFTAK. The helical transmembrane segment at 106–126 threads the bilayer; the sequence is LLLLVNVGVFGLILLLTLLLS. At 127 to 133 the chain is on the extracellular side; it reads AGDRRIV. A helical transmembrane segment spans residues 134–154; sequence VLGWVCVGFSVSVFVAPLSII. The MtN3/slv 2 domain occupies 134 to 217; the sequence is VLGWVCVGFS…MGLYAMYRNS (84 aa). Topologically, residues 155–167 are cytoplasmic; it reads RLVVRTKSVEFMP. A helical membrane pass occupies residues 168-188; it reads FSLSFSLTISAVVWFLYGLLI. Residues 189 to 192 lie on the Extracellular side of the membrane; the sequence is KDKY. A helical membrane pass occupies residues 193–213; sequence VALPNVLGFSFGVIQMGLYAM. At 214–303 the chain is on the cytoplasmic side; sequence YRNSTPKAVL…AGAGEKKVAA (90 aa). Residues 266 to 290 form a disordered region; sequence HPVDVESPPAEAPPQEDDKAAAATA.

Belongs to the SWEET sugar transporter family. In terms of assembly, forms homooligomers and/or heterooligomers.

It is found in the cell membrane. Mediates both low-affinity uptake and efflux of sugar across the plasma membrane. The polypeptide is Bidirectional sugar transporter SWEET14 (SWEET14) (Oryza sativa subsp. indica (Rice)).